The following is a 511-amino-acid chain: NADH-quinone oxidoreductase subunit N 1 (511 aa).

Transmembrane regions (helical) follow at residues 15 to 35 (LALP…LDLV), 46 to 66 (ALAL…WQAV), 89 to 109 (FAIY…LMSI), 120 to 140 (GEYH…ASGM), 142 to 162 (LILL…LVGF), 177 to 197 (LLLG…FYGL), 221 to 241 (PIAL…IAAV), 264 to 284 (VAVK…MLWP), 289 to 309 (YTPI…FAAL), 317 to 337 (LLAY…VASD), 347 to 367 (GILV…AVIT), 393 to 413 (AVLL…AGFW), 426 to 446 (GHYT…YYYL), and 471 to 491 (AALW…EVFL).

Belongs to the complex I subunit 2 family. NDH-1 is composed of 14 different subunits. Subunits NuoA, H, J, K, L, M, N constitute the membrane sector of the complex.

The protein localises to the cell inner membrane. The enzyme catalyses a quinone + NADH + 5 H(+)(in) = a quinol + NAD(+) + 4 H(+)(out). Functionally, NDH-1 shuttles electrons from NADH, via FMN and iron-sulfur (Fe-S) centers, to quinones in the respiratory chain. The immediate electron acceptor for the enzyme in this species is believed to be ubiquinone. Couples the redox reaction to proton translocation (for every two electrons transferred, four hydrogen ions are translocated across the cytoplasmic membrane), and thus conserves the redox energy in a proton gradient. This Koribacter versatilis (strain Ellin345) protein is NADH-quinone oxidoreductase subunit N 1.